The chain runs to 247 residues: 5'-nucleotidase SurE (247 aa).

A divalent metal cation is bound by residues Asp-8, Asp-9, Ser-39, and Asn-95.

This sequence belongs to the SurE nucleotidase family. The cofactor is a divalent metal cation.

It is found in the cytoplasm. It carries out the reaction a ribonucleoside 5'-phosphate + H2O = a ribonucleoside + phosphate. Functionally, nucleotidase that shows phosphatase activity on nucleoside 5'-monophosphates. In Thermotoga petrophila (strain ATCC BAA-488 / DSM 13995 / JCM 10881 / RKU-1), this protein is 5'-nucleotidase SurE.